We begin with the raw amino-acid sequence, 136 residues long: Class I hydrophobin 16 (136 aa).

An N-terminal signal peptide occupies residues 1-19; sequence MKFTSVIALVATAATLVGA. 4 cysteine pairs are disulfide-bonded: Cys58–Cys115, Cys65–Cys109, Cys66–Cys99, and Cys116–Cys129. Asn74 carries an N-linked (GlcNAc...) asparagine glycan.

The protein belongs to the fungal hydrophobin family. Self-assembles to form functional amyloid fibrils called rodlets. Self-assembly into fibrillar rodlets occurs spontaneously at hydrophobic:hydrophilic interfaces and the rodlets further associate laterally to form amphipathic monolayers.

Its subcellular location is the secreted. It localises to the cell wall. Aerial growth, conidiation, and dispersal of filamentous fungi in the environment rely upon a capability of their secreting small amphipathic proteins called hydrophobins (HPBs) with low sequence identity. Class I can self-assemble into an outermost layer of rodlet bundles on aerial cell surfaces, conferring cellular hydrophobicity that supports fungal growth, development and dispersal; whereas Class II form highly ordered films at water-air interfaces through intermolecular interactions but contribute nothing to the rodlet structure. Hydph16 is a class I hydrophobin that has specific functions in aerial mycelium formation, cell wall stress protection, and cell wall structure formation, but does not seem to be involved in mycelial hydrophobicity. Specifically functions in resisting cell wall synthesis inhibitors. This chain is Class I hydrophobin 16, found in Pleurotus ostreatus (strain PC15) (Oyster mushroom).